A 115-amino-acid chain; its full sequence is Beta-2-microglobulin (115 aa).

An N-terminal signal peptide occupies residues 1–18 (MGLLICSLLLGLLCCSMA). Positions 23-114 (PKVEVYTREP…KSKDHFLMIG (92 aa)) constitute an Ig-like C1-type domain.

Belongs to the beta-2-microglobulin family. As to quaternary structure, heterodimer of an alpha chain and a beta chain. Beta-2-microglobulin is the beta-chain of major histocompatibility complex class I molecules.

The protein resides in the secreted. Its function is as follows. Component of the class I major histocompatibility complex (MHC). Involved in the presentation of peptide antigens to the immune system. This is Beta-2-microglobulin (b2m) from Paralichthys olivaceus (Bastard halibut).